A 435-amino-acid polypeptide reads, in one-letter code: Methylenetetrahydrofolate--tRNA-(uracil-5-)-methyltransferase TrmFO (435 aa).

Residue 7–12 (GAGLAG) participates in FAD binding.

It belongs to the MnmG family. TrmFO subfamily. FAD is required as a cofactor.

It localises to the cytoplasm. It catalyses the reaction uridine(54) in tRNA + (6R)-5,10-methylene-5,6,7,8-tetrahydrofolate + NADH + H(+) = 5-methyluridine(54) in tRNA + (6S)-5,6,7,8-tetrahydrofolate + NAD(+). The enzyme catalyses uridine(54) in tRNA + (6R)-5,10-methylene-5,6,7,8-tetrahydrofolate + NADPH + H(+) = 5-methyluridine(54) in tRNA + (6S)-5,6,7,8-tetrahydrofolate + NADP(+). Functionally, catalyzes the folate-dependent formation of 5-methyl-uridine at position 54 (M-5-U54) in all tRNAs. This Thermotoga neapolitana (strain ATCC 49049 / DSM 4359 / NBRC 107923 / NS-E) protein is Methylenetetrahydrofolate--tRNA-(uracil-5-)-methyltransferase TrmFO.